The chain runs to 360 residues: D-alanine--D-alanine ligase (360 aa).

The region spanning 146 to 352 (KLCVADAGIA…YRNLITRLLE (207 aa)) is the ATP-grasp domain. Residue 179-234 (EAQVSYPLFVKPASLGSSIGISKVHNREELHPALQAACALDWKVVVESTVKGREIE) participates in ATP binding. Mg(2+)-binding residues include aspartate 305, glutamate 319, and asparagine 321.

This sequence belongs to the D-alanine--D-alanine ligase family. It depends on Mg(2+) as a cofactor. The cofactor is Mn(2+).

It localises to the cytoplasm. The catalysed reaction is 2 D-alanine + ATP = D-alanyl-D-alanine + ADP + phosphate + H(+). It functions in the pathway cell wall biogenesis; peptidoglycan biosynthesis. Functionally, cell wall formation. The polypeptide is D-alanine--D-alanine ligase (Chlorobium chlorochromatii (strain CaD3)).